Consider the following 259-residue polypeptide: Methionine aminopeptidase (259 aa).

His78 contacts substrate. 3 residues coordinate a divalent metal cation: Asp95, Asp106, and His169. His176 contacts substrate. An a divalent metal cation-binding site is contributed by Glu202. Trp220 is a binding site for substrate. Glu234 contacts a divalent metal cation.

This sequence belongs to the peptidase M24A family. Methionine aminopeptidase type 1 subfamily. Monomer. It depends on Co(2+) as a cofactor. Zn(2+) is required as a cofactor. Requires Mn(2+) as cofactor. Fe(2+) serves as cofactor.

It catalyses the reaction Release of N-terminal amino acids, preferentially methionine, from peptides and arylamides.. Functionally, removes the N-terminal methionine from nascent proteins. The N-terminal methionine is often cleaved when the second residue in the primary sequence is small and uncharged (Met-Ala-, Cys, Gly, Pro, Ser, Thr, or Val). Requires deformylation of the N(alpha)-formylated initiator methionine before it can be hydrolyzed. The chain is Methionine aminopeptidase from Rickettsia prowazekii (strain Madrid E).